Consider the following 380-residue polypeptide: Tetraacyldisaccharide 4'-kinase (380 aa).

Residue 51–58 (SVGGTGKT) participates in ATP binding.

This sequence belongs to the LpxK family.

It carries out the reaction a lipid A disaccharide + ATP = a lipid IVA + ADP + H(+). Its pathway is glycolipid biosynthesis; lipid IV(A) biosynthesis; lipid IV(A) from (3R)-3-hydroxytetradecanoyl-[acyl-carrier-protein] and UDP-N-acetyl-alpha-D-glucosamine: step 6/6. Functionally, transfers the gamma-phosphate of ATP to the 4'-position of a tetraacyldisaccharide 1-phosphate intermediate (termed DS-1-P) to form tetraacyldisaccharide 1,4'-bis-phosphate (lipid IVA). This Bacteroides thetaiotaomicron (strain ATCC 29148 / DSM 2079 / JCM 5827 / CCUG 10774 / NCTC 10582 / VPI-5482 / E50) protein is Tetraacyldisaccharide 4'-kinase.